Consider the following 759-residue polypeptide: Subtilisin-like protease SBT3.16 (759 aa).

An N-terminal signal peptide occupies residues 1–33 (MELSSLIVPNNKKHFVVVFIGLVLIFKIALITA). A propeptide spans 34-119 (ANEKSQIYTV…VTRSKNMKLK (86 aa)) (activation peptide). Residues 41–118 (YTVHLGERQH…RVTRSKNMKL (78 aa)) form the Inhibitor I9 domain. Residues 124–608 (SDYLGLTSAA…GGLVNPVKVA (485 aa)) enclose the Peptidase S8 domain. The Charge relay system role is filled by aspartate 153. 2 N-linked (GlcNAc...) asparagine glycosylation sites follow: asparagine 186 and asparagine 209. Residue histidine 229 is the Charge relay system of the active site. Asparagine 371 is a glycosylation site (N-linked (GlcNAc...) asparagine). Catalysis depends on serine 539, which acts as the Charge relay system. Asparagine 632 and asparagine 711 each carry an N-linked (GlcNAc...) asparagine glycan.

It belongs to the peptidase S8 family.

It is found in the secreted. The protein is Subtilisin-like protease SBT3.16 of Arabidopsis thaliana (Mouse-ear cress).